We begin with the raw amino-acid sequence, 347 residues long: MVRISLDVMGGDYGPEVVIPGAARALERHPDIKFVLFGQEARCIELLAKHPKLKASSTFHDCEIAVGMDEKPSQALRRGRGKSSMWKAIDAINADEADVVVSAGNTGALMAMSVFCLRTMQGIQRPAIAAIWPTLKGESIVLDVGATIGADAQQLMDFALMGGAMARALFEVERPSVGLLNVGVEEIKGQEEVKEAGRLIREADVEGIEYYGFVEGDDIGRGTVDVVVTEGFSGNIALKAAEGTARQIAEYLRAAMSRTLLARVGYVFAKGAFDRLREKMDPRKVNGGVFLGLNGIVIKSHGGADAEGFAAAIDVGYDMVKNGLKAKIEADLARYHGAQPSEAVPRA.

The protein belongs to the PlsX family. Homodimer. Probably interacts with PlsY.

The protein resides in the cytoplasm. The catalysed reaction is a fatty acyl-[ACP] + phosphate = an acyl phosphate + holo-[ACP]. It functions in the pathway lipid metabolism; phospholipid metabolism. Functionally, catalyzes the reversible formation of acyl-phosphate (acyl-PO(4)) from acyl-[acyl-carrier-protein] (acyl-ACP). This enzyme utilizes acyl-ACP as fatty acyl donor, but not acyl-CoA. In Rhizobium meliloti (strain 1021) (Ensifer meliloti), this protein is Phosphate acyltransferase.